The primary structure comprises 294 residues: Nucleotide-binding protein CA_C0511 (294 aa).

8 to 15 (GLSGAGKT) lines the ATP pocket. Residue 59–62 (DIRG) coordinates GTP.

Belongs to the RapZ-like family.

Functionally, displays ATPase and GTPase activities. The protein is Nucleotide-binding protein CA_C0511 of Clostridium acetobutylicum (strain ATCC 824 / DSM 792 / JCM 1419 / IAM 19013 / LMG 5710 / NBRC 13948 / NRRL B-527 / VKM B-1787 / 2291 / W).